The sequence spans 127 residues: Snaclec bothroinsularin subunit beta (127 aa).

3 disulfide bridges follow: Cys2/Cys13, Cys30/Cys123, and Cys100/Cys115. The C-type lectin domain occupies 9 to 124 (YEGSCYRVFE…CTKLEYFVCE (116 aa)).

Belongs to the snaclec family. Heterodimer of subunits alpha and beta; disulfide-linked. As to expression, expressed by the venom gland.

The protein localises to the secreted. In terms of biological role, thrombin and prothrombin (F2) inhibitor. The IC(50) of thrombin-induced platelet aggregation and fibrinocoagulation is 62 and 35 nM, respectively. Its inhibitory activity is at least 10-fold lower than that observed for other thrombin inhibitors. This is Snaclec bothroinsularin subunit beta from Bothrops insularis (Golden lancehead).